The chain runs to 554 residues: Terpene synthase 17 (554 aa).

Residues Asp-306, Asp-310, and Glu-458 each contribute to the Mg(2+) site. Positions 306 to 310 (DDTYD) match the DDXXD motif motif.

The protein belongs to the terpene synthase family. Tpsa subfamily. It depends on Mg(2+) as a cofactor. The cofactor is Mn(2+).

It carries out the reaction (2E,6E)-farnesyl diphosphate = (+)-valencene + diphosphate. The catalysed reaction is (2E,6E)-farnesyl diphosphate = (E)-beta-farnesene + diphosphate. The enzyme catalyses (2E,6E)-farnesyl diphosphate = gamma-gurjunene + diphosphate. It catalyses the reaction (2Z,6Z)-farnesyl diphosphate = beta-bisabolene + diphosphate. It carries out the reaction (2Z,6Z)-farnesyl diphosphate = (E)-gamma-bisabolene + diphosphate. The catalysed reaction is (2E)-geranyl diphosphate = limonene + diphosphate. The enzyme catalyses (2E)-geranyl diphosphate = beta-myrcene + diphosphate. It catalyses the reaction (2E)-geranyl diphosphate = (E)-beta-ocimene + diphosphate. It carries out the reaction (2E)-geranyl diphosphate = terpinolene + diphosphate. The catalysed reaction is (2E)-geranyl diphosphate = gamma-terpinene + diphosphate. The enzyme catalyses (2Z,6Z)-farnesyl diphosphate = (Z)-gamma-bisabolene + diphosphate. It catalyses the reaction (2E,6E)-farnesyl diphosphate = (1S,5S,6R)-alpha-bergamotene + diphosphate. It carries out the reaction (2Z,6Z)-farnesyl diphosphate = (1S,5S,6S)-alpha-bergamotene + diphosphate. It participates in secondary metabolite biosynthesis; terpenoid biosynthesis. Its function is as follows. Sesquiterpene synthase involved in the biosynthesis of volatile compounds. Mediates the conversion of (2E,6E)-farnesyl diphosphate (FPP) into gamma-gurjunene, (E)-beta-farnesene and (+)-valencene, and of (2Z,6Z)-farnesyl diphosphate ((ZZ)-FPP) into (E)-alpha-bergamotene and (Z)-gamma-bisabolene as well as beta-bisabolene, (Z)-alpha-bergamotene and (E)-gamma-bisabolene to a lower extent. Can act with a low efficiency as a monoterpene synthase with geranyl diphosphate (GPP) as substrate, thus producing beta-myrcene, (E)-beta-ocimene, limonene, terpinolene, gamma-terpinene and (Z)-beta-ocimene. This chain is Terpene synthase 17, found in Solanum habrochaites (Wild tomato).